The sequence spans 518 residues: Membrane-bound lytic murein transglycosylase F (518 aa).

The N-terminal stretch at 1-21 is a signal peptide; it reads MKKLKINYLFIGILALLLAVA. The tract at residues 22 to 269 is non-LT domain; the sequence is LWPSIPWFGK…RIEEKYLGHG (248 aa). The LT domain stretch occupies residues 270–518; that stretch reads DDFDYVDTRT…SRKGSEEKQN (249 aa). The active site involves Glu314.

In the N-terminal section; belongs to the bacterial solute-binding protein 3 family. This sequence in the C-terminal section; belongs to the transglycosylase Slt family.

Its subcellular location is the cell outer membrane. The enzyme catalyses Exolytic cleavage of the (1-&gt;4)-beta-glycosidic linkage between N-acetylmuramic acid (MurNAc) and N-acetylglucosamine (GlcNAc) residues in peptidoglycan, from either the reducing or the non-reducing ends of the peptidoglycan chains, with concomitant formation of a 1,6-anhydrobond in the MurNAc residue.. Functionally, murein-degrading enzyme that degrades murein glycan strands and insoluble, high-molecular weight murein sacculi, with the concomitant formation of a 1,6-anhydromuramoyl product. Lytic transglycosylases (LTs) play an integral role in the metabolism of the peptidoglycan (PG) sacculus. Their lytic action creates space within the PG sacculus to allow for its expansion as well as for the insertion of various structures such as secretion systems and flagella. In Escherichia coli (strain SMS-3-5 / SECEC), this protein is Membrane-bound lytic murein transglycosylase F.